The following is a 764-amino-acid chain: Molybdenum cofactor sulfurase 1 (764 aa).

Lysine 228 is subject to N6-(pyridoxal phosphate)lysine. Cysteine 394 is a catalytic residue. Residues 607–762 enclose the MOSC domain; it reads LRLLKQSDEE…LYCNSVVEGL (156 aa).

Belongs to the class-V pyridoxal-phosphate-dependent aminotransferase family. MOCOS subfamily. Pyridoxal 5'-phosphate is required as a cofactor.

It carries out the reaction Mo-molybdopterin + L-cysteine + AH2 = thio-Mo-molybdopterin + L-alanine + A + H2O. Its function is as follows. Sulfurates the molybdenum cofactor. Sulfation of molybdenum is essential for xanthine dehydrogenase (XDH) and aldehyde oxidase (ADO) enzymes in which molybdenum cofactor is liganded by 1 oxygen and 1 sulfur atom in active form. The polypeptide is Molybdenum cofactor sulfurase 1 (Aedes aegypti (Yellowfever mosquito)).